The sequence spans 202 residues: Small ribosomal subunit protein uS4c (202 aa).

Positions 90–153 (MRLDNIIFRL…KSQAIISKNI (64 aa)) constitute an S4 RNA-binding domain.

Belongs to the universal ribosomal protein uS4 family. Part of the 30S ribosomal subunit. Contacts protein S5. The interaction surface between S4 and S5 is involved in control of translational fidelity.

The protein resides in the plastid. It is found in the chloroplast. One of the primary rRNA binding proteins, it binds directly to 16S rRNA where it nucleates assembly of the body of the 30S subunit. In terms of biological role, with S5 and S12 plays an important role in translational accuracy. This Splachnum sphaericum (Pinkstink dung moss) protein is Small ribosomal subunit protein uS4c (rps4).